The primary structure comprises 109 residues: Large ribosomal subunit protein uL22 (109 aa).

Belongs to the universal ribosomal protein uL22 family. As to quaternary structure, part of the 50S ribosomal subunit.

Its function is as follows. This protein binds specifically to 23S rRNA; its binding is stimulated by other ribosomal proteins, e.g. L4, L17, and L20. It is important during the early stages of 50S assembly. It makes multiple contacts with different domains of the 23S rRNA in the assembled 50S subunit and ribosome. In terms of biological role, the globular domain of the protein is located near the polypeptide exit tunnel on the outside of the subunit, while an extended beta-hairpin is found that lines the wall of the exit tunnel in the center of the 70S ribosome. The sequence is that of Large ribosomal subunit protein uL22 from Cupriavidus taiwanensis (strain DSM 17343 / BCRC 17206 / CCUG 44338 / CIP 107171 / LMG 19424 / R1) (Ralstonia taiwanensis (strain LMG 19424)).